Consider the following 344-residue polypeptide: Cyclin-dependent kinase 20 (344 aa).

Positions 4-288 (YSILGRIGEG…ARQALLHPYF (285 aa)) constitute a Protein kinase domain. Residues 10 to 18 (IGEGAHGIV) and K33 each bind ATP. The active-site Proton acceptor is the D127.

This sequence belongs to the protein kinase superfamily. CMGC Ser/Thr protein kinase family. CDC2/CDKX subfamily. Monomer. Interacts with tbc1d32.

The protein localises to the nucleus. Its subcellular location is the cytoplasm. It localises to the cell projection. The protein resides in the cilium. The enzyme catalyses L-seryl-[protein] + ATP = O-phospho-L-seryl-[protein] + ADP + H(+). It catalyses the reaction L-threonyl-[protein] + ATP = O-phospho-L-threonyl-[protein] + ADP + H(+). Its function is as follows. Involved in cell growth. Activates cdk2, a kinase involved in the control of the cell cycle, by phosphorylating residue 'Thr-160'. Required for high-level Shh responses in the developing neural tube. Together with tbc1d32, controls the structure of the primary cilium by coordinating assembly of the ciliary membrane and axoneme, allowing gli2 to be properly activated in response to SHH signaling. The chain is Cyclin-dependent kinase 20 (cdk20) from Danio rerio (Zebrafish).